Here is a 628-residue protein sequence, read N- to C-terminus: Serine/threonine-protein kinase Nek11 (628 aa).

The Protein kinase domain maps to 30 to 288 (YVLQQKLGSG…AADILKAPYM (259 aa)). Residues 36–44 (LGSGSFGTV) and lysine 62 each bind ATP. Aspartate 159 (proton acceptor) is an active-site residue. Serine 274 carries the post-translational modification Phosphoserine; by CHEK1. Positions 347–385 (WLRKLQAADERARRLKKIAEENYKENDKRMQALRSRNVG) form a coiled coil. Residues 452–463 (SEDSEEQEEEMI) are compositionally biased toward acidic residues. Residues 452–475 (SEDSEEQEEEMIFSEAGGDTKEEE) form a disordered region.

Belongs to the protein kinase superfamily. NEK Ser/Thr protein kinase family. NIMA subfamily. In terms of assembly, interacts with NEK2. The cofactor is Mn(2+). Mg(2+) is required as a cofactor. Phosphorylated by NEK2. Phosphorylation at Ser-274 is important for its activation.

It localises to the nucleus. The protein resides in the nucleolus. The catalysed reaction is L-seryl-[protein] + ATP = O-phospho-L-seryl-[protein] + ADP + H(+). It carries out the reaction L-threonyl-[protein] + ATP = O-phospho-L-threonyl-[protein] + ADP + H(+). Autorepressed by intramolecular binding of the C-terminus which dissociates following phosphorylation by NEK2. Activated in response to DNA damage. Inhibited by zinc. Protein kinase which plays an important role in the G2/M checkpoint response to DNA damage. Controls degradation of CDC25A by directly phosphorylating it on residues whose phosphorylation is required for BTRC-mediated polyubiquitination and degradation. The protein is Serine/threonine-protein kinase Nek11 of Mus musculus (Mouse).